A 338-amino-acid chain; its full sequence is Putative peptide import ATP-binding protein BOV_A0348 (338 aa).

An ABC transporter domain is found at 10 to 263 (KGLRTVFRTR…PRHPYTMGLL (254 aa)). An ATP-binding site is contributed by 43-50 (GESGSGKS).

Belongs to the ABC transporter superfamily. The complex is composed of two ATP-binding proteins (BOV_A0347 and BOV_A0348), two transmembrane proteins (BOV_A0350 and BOV_A0351) and a solute-binding protein (BOV_A0352).

It is found in the cell inner membrane. In terms of biological role, probably part of an ABC transporter complex that could be involved in peptide import. Probably responsible for energy coupling to the transport system. The polypeptide is Putative peptide import ATP-binding protein BOV_A0348 (Brucella ovis (strain ATCC 25840 / 63/290 / NCTC 10512)).